The following is a 290-amino-acid chain: tRNA pseudouridine synthase A (290 aa).

The Nucleophile role is filled by D56. A substrate-binding site is contributed by Y109.

It belongs to the tRNA pseudouridine synthase TruA family.

It carries out the reaction uridine(38/39/40) in tRNA = pseudouridine(38/39/40) in tRNA. In terms of biological role, formation of pseudouridine at positions 38, 39 and 40 in the anticodon stem and loop of transfer RNAs. The sequence is that of tRNA pseudouridine synthase A from Methanobrevibacter smithii (strain ATCC 35061 / DSM 861 / OCM 144 / PS).